We begin with the raw amino-acid sequence, 317 residues long: Putative HTH-type transcriptional regulatory protein TGAM_1316 (317 aa).

Residues 131–189 enclose the HTH cro/C1-type domain; sequence LKKLREKHGYSVGELASLLGVSRKSLLNYERNEQAVSLEVALRMEELFDEPIAEPIDVL. The H-T-H motif DNA-binding region spans 142 to 161; the sequence is VGELASLLGVSRKSLLNYER.

The protein is Putative HTH-type transcriptional regulatory protein TGAM_1316 of Thermococcus gammatolerans (strain DSM 15229 / JCM 11827 / EJ3).